Consider the following 445-residue polypeptide: Argininosuccinate synthase (445 aa).

Residues 17-25 (AFSGGLDTS) and alanine 43 contribute to the ATP site. Tyrosine 99 is a binding site for L-citrulline. ATP contacts are provided by glycine 129 and threonine 131. Residues threonine 131, asparagine 135, and aspartate 136 each contribute to the L-aspartate site. An L-citrulline-binding site is contributed by asparagine 135. An ATP-binding site is contributed by aspartate 136. L-citrulline is bound by residues arginine 139 and serine 192. Aspartate 194 is a binding site for ATP. Threonine 201, glutamate 203, and glutamate 280 together coordinate L-citrulline.

This sequence belongs to the argininosuccinate synthase family. Type 2 subfamily. As to quaternary structure, homotetramer.

Its subcellular location is the cytoplasm. The enzyme catalyses L-citrulline + L-aspartate + ATP = 2-(N(omega)-L-arginino)succinate + AMP + diphosphate + H(+). It participates in amino-acid biosynthesis; L-arginine biosynthesis; L-arginine from L-ornithine and carbamoyl phosphate: step 2/3. This Burkholderia cenocepacia (strain HI2424) protein is Argininosuccinate synthase.